The sequence spans 237 residues: Probable transcriptional regulatory protein Exig_1693 (237 aa).

Belongs to the TACO1 family. YeeN subfamily.

It localises to the cytoplasm. In Exiguobacterium sibiricum (strain DSM 17290 / CCUG 55495 / CIP 109462 / JCM 13490 / 255-15), this protein is Probable transcriptional regulatory protein Exig_1693.